The primary structure comprises 99 residues: DNA-directed RNA polymerase subunit omega (99 aa).

Belongs to the RNA polymerase subunit omega family. In terms of assembly, the RNAP catalytic core consists of 2 alpha, 1 beta, 1 beta' and 1 omega subunit. When a sigma factor is associated with the core the holoenzyme is formed, which can initiate transcription.

It carries out the reaction RNA(n) + a ribonucleoside 5'-triphosphate = RNA(n+1) + diphosphate. Functionally, promotes RNA polymerase assembly. Latches the N- and C-terminal regions of the beta' subunit thereby facilitating its interaction with the beta and alpha subunits. This Stenotrophomonas maltophilia (strain K279a) protein is DNA-directed RNA polymerase subunit omega.